The chain runs to 647 residues: Probable squalene--hopene cyclase (647 aa).

The stretch at 67 to 108 is one PFTB 1 repeat; it reads EAKIGNYLRRTQGAHGGWPLVHDGPFDMSASVKSYFALKMIG. Residue Asp388 is the Proton donor of the active site. 2 PFTB repeats span residues 413 to 454 and 530 to 577; these read IARG…GALL and IRKA…ALLG.

This sequence belongs to the terpene cyclase/mutase family.

The enzyme catalyses squalene = hop-22(29)-ene. It carries out the reaction squalene + H2O = hopan-22-ol. It participates in secondary metabolite biosynthesis; hopanoid biosynthesis. Functionally, catalyzes the cyclization of squalene into hopene. Probably part of an operon y4aABCD involved in the synthesis of an isoprenoid compound. The polypeptide is Probable squalene--hopene cyclase (shc) (Sinorhizobium fredii (strain NBRC 101917 / NGR234)).